Consider the following 709-residue polypeptide: Eukaryotic translation initiation factor 3 subunit B (709 aa).

The interval 1-98 (MSINEEEYLR…LFIQYKNVAD (98 aa)) is sufficient for interaction with HCR1 and TIF32. The interval 1 to 221 (MSINEEEYLR…GIQAWGGADF (221 aa)) is sufficient for interaction with PIC8. The RRM domain maps to 37–124 (NYVIVDGAPI…HRLLVNRLSD (88 aa)).

It belongs to the eIF-3 subunit B family. As to quaternary structure, component of the eukaryotic translation initiation factor 3 (eIF-3) complex.

Its subcellular location is the cytoplasm. Its function is as follows. RNA-binding component of the eukaryotic translation initiation factor 3 (eIF-3) complex, which is involved in protein synthesis of a specialized repertoire of mRNAs and, together with other initiation factors, stimulates binding of mRNA and methionyl-tRNAi to the 40S ribosome. The eIF-3 complex specifically targets and initiates translation of a subset of mRNAs involved in cell proliferation. This Lodderomyces elongisporus (strain ATCC 11503 / CBS 2605 / JCM 1781 / NBRC 1676 / NRRL YB-4239) (Yeast) protein is Eukaryotic translation initiation factor 3 subunit B.